Consider the following 233-residue polypeptide: Large ribosomal subunit protein uL1 (233 aa).

This sequence belongs to the universal ribosomal protein uL1 family. Part of the 50S ribosomal subunit.

In terms of biological role, binds directly to 23S rRNA. The L1 stalk is quite mobile in the ribosome, and is involved in E site tRNA release. Its function is as follows. Protein L1 is also a translational repressor protein, it controls the translation of the L11 operon by binding to its mRNA. This chain is Large ribosomal subunit protein uL1, found in Campylobacter concisus (strain 13826).